The following is a 98-amino-acid chain: Cystatin-B (98 aa).

Position 1 is an N-acetylmethionine (M1). Positions 46–50 (QVVAG) match the Secondary area of contact motif.

Belongs to the cystatin family.

The protein localises to the cytoplasm. In terms of biological role, this is an intracellular thiol proteinase inhibitor. This is Cystatin-B (CSTB) from Sus scrofa (Pig).